The following is a 423-amino-acid chain: AP-1 complex subunit mu-1 (423 aa).

The residue at position 2 (serine 2) is an N-acetylserine. Phosphothreonine is present on residues threonine 152, threonine 154, and threonine 223. Residues 168-421 (KNEVFLDVIE…ITQNGDYQLR (254 aa)) enclose the MHD domain.

The protein belongs to the adaptor complexes medium subunit family. As to quaternary structure, adaptor protein complex 1 (AP-1) is a heterotetramer composed of two large adaptins (gamma-type subunit AP1G1 and beta-type subunit AP1B1), a medium adaptin (mu-type subunit AP1M1 or AP1M2) and a small adaptin (sigma-type subunit AP1S1 or AP1S2 or AP1S3). Interacts with MARCHF11. In terms of processing, phosphorylation of membrane-bound AP1M1/AP1M2 increases its affinity for sorting signals.

The protein resides in the cytoplasmic vesicle. It is found in the clathrin-coated vesicle membrane. It localises to the golgi apparatus. Its function is as follows. Subunit of clathrin-associated adaptor protein complex 1 that plays a role in protein sorting in the trans-Golgi network (TGN) and endosomes. The AP complexes mediate the recruitment of clathrin to membranes and the recognition of sorting signals within the cytosolic tails of transmembrane cargo molecules. The protein is AP-1 complex subunit mu-1 of Rattus norvegicus (Rat).